Consider the following 227-residue polypeptide: Phosphoribosylformylglycinamidine synthase subunit PurQ (227 aa).

The Glutamine amidotransferase type-1 domain occupies 3–225; that stretch reads FAVIVFPGSN…LKQWRETYVV (223 aa). The active-site Nucleophile is the Cys-86. Active-site residues include His-194 and Glu-196.

In terms of assembly, part of the FGAM synthase complex composed of 1 PurL, 1 PurQ and 2 PurS subunits.

It is found in the cytoplasm. It carries out the reaction N(2)-formyl-N(1)-(5-phospho-beta-D-ribosyl)glycinamide + L-glutamine + ATP + H2O = 2-formamido-N(1)-(5-O-phospho-beta-D-ribosyl)acetamidine + L-glutamate + ADP + phosphate + H(+). The enzyme catalyses L-glutamine + H2O = L-glutamate + NH4(+). The protein operates within purine metabolism; IMP biosynthesis via de novo pathway; 5-amino-1-(5-phospho-D-ribosyl)imidazole from N(2)-formyl-N(1)-(5-phospho-D-ribosyl)glycinamide: step 1/2. In terms of biological role, part of the phosphoribosylformylglycinamidine synthase complex involved in the purines biosynthetic pathway. Catalyzes the ATP-dependent conversion of formylglycinamide ribonucleotide (FGAR) and glutamine to yield formylglycinamidine ribonucleotide (FGAM) and glutamate. The FGAM synthase complex is composed of three subunits. PurQ produces an ammonia molecule by converting glutamine to glutamate. PurL transfers the ammonia molecule to FGAR to form FGAM in an ATP-dependent manner. PurS interacts with PurQ and PurL and is thought to assist in the transfer of the ammonia molecule from PurQ to PurL. In Bacillus cereus (strain Q1), this protein is Phosphoribosylformylglycinamidine synthase subunit PurQ.